Here is a 101-residue protein sequence, read N- to C-terminus: ATP synthase subunit c (101 aa).

Transmembrane regions (helical) follow at residues 31 to 51 and 81 to 101; these read AFAYLGAGLAMIGVIGVGAGQ and AISETSSIYALLVALILIFVG.

It belongs to the ATPase C chain family. As to quaternary structure, F-type ATPases have 2 components, F(1) - the catalytic core - and F(0) - the membrane proton channel. F(1) has five subunits: alpha(3), beta(3), gamma(1), delta(1), epsilon(1). F(0) has three main subunits: a(1), b(2) and c(10-14). The alpha and beta chains form an alternating ring which encloses part of the gamma chain. F(1) is attached to F(0) by a central stalk formed by the gamma and epsilon chains, while a peripheral stalk is formed by the delta and b chains.

The protein resides in the cell membrane. In terms of biological role, f(1)F(0) ATP synthase produces ATP from ADP in the presence of a proton or sodium gradient. F-type ATPases consist of two structural domains, F(1) containing the extramembraneous catalytic core and F(0) containing the membrane proton channel, linked together by a central stalk and a peripheral stalk. During catalysis, ATP synthesis in the catalytic domain of F(1) is coupled via a rotary mechanism of the central stalk subunits to proton translocation. Key component of the F(0) channel; it plays a direct role in translocation across the membrane. A homomeric c-ring of between 10-14 subunits forms the central stalk rotor element with the F(1) delta and epsilon subunits. The protein is ATP synthase subunit c of Mesomycoplasma hyopneumoniae (strain 232) (Mycoplasma hyopneumoniae).